The chain runs to 362 residues: Glycyl-glycine endopeptidase ALE-1 (362 aa).

The N-terminal stretch at 1–35 is a signal peptide; that stretch reads MDTNRKFTLVKSLSIGLGTFLVGSVFLTVNDEASA. The interval 35 to 110 is disordered; it reads ASTKVDAPKV…PAKADAPKVE (76 aa). Basic and acidic residues predominate over residues 40–110; sequence DAPKVEQEAP…PAKADAPKVE (71 aa). Zn(2+)-binding residues include histidine 150 and aspartate 154. Residue histidine 231 is part of the active site. Histidine 233 is a binding site for Zn(2+). Residues 282–350 enclose the SH3b domain; it reads SESASFTANT…YLPVRTWNES (69 aa).

Belongs to the peptidase M23B family. It depends on Zn(2+) as a cofactor.

Its subcellular location is the secreted. The catalysed reaction is Hydrolysis of the -Gly-|-Gly- bond in the pentaglycine inter-peptide link joining staphylococcal cell wall peptidoglycans.. Functionally, lyses staphylococcal cells by hydrolyzing the polyglycine interpeptide bridges of the peptidoglycan. This chain is Glycyl-glycine endopeptidase ALE-1, found in Staphylococcus capitis.